The following is a 295-amino-acid chain: Pantothenate synthetase (295 aa).

His37 functions as the Proton donor in the catalytic mechanism. Residue Gln61 participates in (R)-pantoate binding. Residue Gln61 participates in beta-alanine binding. Position 154–157 (154–157) interacts with ATP; sequence GRKD. Gln160 contacts (R)-pantoate. Residues Val183 and 191–194 each bind ATP; that span reads QSSR.

It belongs to the pantothenate synthetase family. In terms of assembly, homodimer.

It localises to the cytoplasm. The catalysed reaction is (R)-pantoate + beta-alanine + ATP = (R)-pantothenate + AMP + diphosphate + H(+). The protein operates within cofactor biosynthesis; (R)-pantothenate biosynthesis; (R)-pantothenate from (R)-pantoate and beta-alanine: step 1/1. Catalyzes the condensation of pantoate with beta-alanine in an ATP-dependent reaction via a pantoyl-adenylate intermediate. The sequence is that of Pantothenate synthetase from Salinibacter ruber (strain DSM 13855 / M31).